The chain runs to 161 residues: Small ribosomal subunit protein uS9 (161 aa).

It belongs to the universal ribosomal protein uS9 family.

The chain is Small ribosomal subunit protein uS9 from Bartonella tribocorum (strain CIP 105476 / IBS 506).